Consider the following 596-residue polypeptide: Aspartate--tRNA(Asp/Asn) ligase (596 aa).

E175 provides a ligand contact to L-aspartate. Residues 199–202 are aspartate; that stretch reads QQYK. L-aspartate-binding residues include R221 and H454. ATP is bound at residue 221–223; sequence RDE. E488 is an ATP binding site. R495 contributes to the L-aspartate binding site. Residue 540–543 participates in ATP binding; sequence GIDR.

It belongs to the class-II aminoacyl-tRNA synthetase family. Type 1 subfamily. In terms of assembly, homodimer.

Its subcellular location is the cytoplasm. It catalyses the reaction tRNA(Asx) + L-aspartate + ATP = L-aspartyl-tRNA(Asx) + AMP + diphosphate. Its function is as follows. Aspartyl-tRNA synthetase with relaxed tRNA specificity since it is able to aspartylate not only its cognate tRNA(Asp) but also tRNA(Asn). Reaction proceeds in two steps: L-aspartate is first activated by ATP to form Asp-AMP and then transferred to the acceptor end of tRNA(Asp/Asn). In Rhizobium johnstonii (strain DSM 114642 / LMG 32736 / 3841) (Rhizobium leguminosarum bv. viciae), this protein is Aspartate--tRNA(Asp/Asn) ligase.